The primary structure comprises 181 residues: UPF0200 protein Ta0179 (181 aa).

6–13 contributes to the ATP binding site; sequence GMPGAGKD.

It belongs to the UPF0200 family.

The sequence is that of UPF0200 protein Ta0179 from Thermoplasma acidophilum (strain ATCC 25905 / DSM 1728 / JCM 9062 / NBRC 15155 / AMRC-C165).